A 337-amino-acid polypeptide reads, in one-letter code: Pentalenene synthase (337 aa).

Residues aspartate 80, aspartate 84, asparagine 219, serine 223, and glutamate 227 each contribute to the Mg(2+) site. The short motif at 80-84 (DDLFD) is the DDXXD motif element.

The protein belongs to the terpene synthase family. Monomer. It depends on Mg(2+) as a cofactor.

It carries out the reaction (2E,6E)-farnesyl diphosphate = pentalenene + diphosphate. Its pathway is sesquiterpene biosynthesis; pentalenene biosynthesis; pentalenene from farnesyl diphosphate: step 1/1. The protein operates within antibiotic biosynthesis; pentalenolactone biosynthesis. Catalyzes the cyclization of farnesyl diphosphate (FPP) to the tricyclic sesquiterpene pentalenene, which is the hydrocarbon precursor of the pentalenolactone family of antibiotics produced by a variety of Streptomyces species. This chain is Pentalenene synthase (pntA), found in Streptomyces arenae.